Here is a 664-residue protein sequence, read N- to C-terminus: Zinc finger protein 710 (664 aa).

Residues lysine 110 and lysine 113 each participate in a glycyl lysine isopeptide (Lys-Gly) (interchain with G-Cter in SUMO2) cross-link. A disordered region spans residues 121-141; it reads VYEVSVPGDDKDAGPAEAPAE. 3 C2H2-type zinc fingers span residues 295 to 317, 323 to 345, and 351 to 373; these read WQCR…ILGH, HSCP…LLTH, and HKCQ…MLLH. Residue lysine 377 forms a Glycyl lysine isopeptide (Lys-Gly) (interchain with G-Cter in SUMO2) linkage. 8 consecutive C2H2-type zinc fingers follow at residues 379–401, 407–429, 435–457, 463–485, 491–513, 519–541, 547–569, and 575–598; these read YSCH…EVKH, HVCV…LASH, YQCL…MLKH, FVCT…SLTH, FKCE…MLIH, YQCH…MIVH, FKCK…MHLH, and FKCP…KVKH.

The protein belongs to the krueppel C2H2-type zinc-finger protein family.

The protein localises to the nucleus. May be involved in transcriptional regulation. The chain is Zinc finger protein 710 (ZNF710) from Homo sapiens (Human).